The primary structure comprises 312 residues: Pectin lyase (312 aa).

R201 is a catalytic residue. Residues G254–K274 are disordered. Positions G256 to K274 are enriched in polar residues.

Belongs to the polysaccharide lyase 1 family.

It carries out the reaction Eliminative cleavage of (1-&gt;4)-alpha-D-galacturonan methyl ester to give oligosaccharides with 4-deoxy-6-O-methyl-alpha-D-galact-4-enuronosyl groups at their non-reducing ends.. In Pseudomonas marginalis (Pseudomonas panacis), this protein is Pectin lyase (pnl).